The primary structure comprises 469 residues: Tubulin gamma-1 chain (469 aa).

142-148 (AGGTGSG) is a GTP binding site.

This sequence belongs to the tubulin family.

The protein localises to the cytoplasm. It localises to the cytoskeleton. Its subcellular location is the microtubule organizing center. Tubulin is the major constituent of microtubules. The gamma chain is found at microtubule organizing centers (MTOC) such as the spindle poles, suggesting that it is involved in the minus-end nucleation of microtubule assembly. The polypeptide is Tubulin gamma-1 chain (TUBG1) (Zea mays (Maize)).